The following is a 529-amino-acid chain: Peptide chain release factor 3 (529 aa).

Residues 11-280 (AKRRTFAIIS…GLVAWAPAPM (270 aa)) form the tr-type G domain. GTP is bound by residues 20–27 (SHPDAGKT), 88–92 (DTPGH), and 142–145 (NKLD).

This sequence belongs to the TRAFAC class translation factor GTPase superfamily. Classic translation factor GTPase family. PrfC subfamily.

It localises to the cytoplasm. Functionally, increases the formation of ribosomal termination complexes and stimulates activities of RF-1 and RF-2. It binds guanine nucleotides and has strong preference for UGA stop codons. It may interact directly with the ribosome. The stimulation of RF-1 and RF-2 is significantly reduced by GTP and GDP, but not by GMP. This Salmonella agona (strain SL483) protein is Peptide chain release factor 3.